The sequence spans 282 residues: Small ribosomal subunit protein uS2 (282 aa).

The segment at 245-265 is disordered; that stretch reads AEEAVEELPLPTGEAQDEASS.

This sequence belongs to the universal ribosomal protein uS2 family.

The polypeptide is Small ribosomal subunit protein uS2 (Chlamydia trachomatis serovar A (strain ATCC VR-571B / DSM 19440 / HAR-13)).